Here is a 195-residue protein sequence, read N- to C-terminus: NADH-quinone oxidoreductase subunit B (195 aa).

Positions 74, 75, 139, and 169 each coordinate [4Fe-4S] cluster.

Belongs to the complex I 20 kDa subunit family. In terms of assembly, NDH-1 is composed of 14 different subunits. Subunits NuoB, C, D, E, F, and G constitute the peripheral sector of the complex. [4Fe-4S] cluster is required as a cofactor.

It localises to the cell inner membrane. The enzyme catalyses a quinone + NADH + 5 H(+)(in) = a quinol + NAD(+) + 4 H(+)(out). NDH-1 shuttles electrons from NADH, via FMN and iron-sulfur (Fe-S) centers, to quinones in the respiratory chain. The immediate electron acceptor for the enzyme in this species is believed to be ubiquinone. Couples the redox reaction to proton translocation (for every two electrons transferred, four hydrogen ions are translocated across the cytoplasmic membrane), and thus conserves the redox energy in a proton gradient. This chain is NADH-quinone oxidoreductase subunit B, found in Methylorubrum extorquens (strain PA1) (Methylobacterium extorquens).